The following is a 299-amino-acid chain: Acetaldehyde dehydrogenase (299 aa).

Position 11–14 (11–14 (SGNI)) interacts with NAD(+). Residue cysteine 126 is the Acyl-thioester intermediate of the active site. Residues 157–165 (SAGPGTRAN) and asparagine 267 contribute to the NAD(+) site.

The protein belongs to the acetaldehyde dehydrogenase family.

The catalysed reaction is acetaldehyde + NAD(+) + CoA = acetyl-CoA + NADH + H(+). This chain is Acetaldehyde dehydrogenase, found in Bacillus thuringiensis (strain Al Hakam).